The following is a 466-amino-acid chain: Polycomb group protein FIE1 (466 aa).

A compositionally biased stretch (basic residues) spans 1 to 10 (MGPTSRNHKS). A disordered region spans residues 1–71 (MGPTSRNHKS…GEGEPQETVL (71 aa)). Low complexity predominate over residues 31-49 (SITASASASAFASPAVANS). WD repeat units follow at residues 167 to 209 (DMNE…IYKS), 212 to 252 (GHGG…LILV), 258 to 298 (GHRH…EYVE), 324 to 361 (IHSN…ENPG), 374 to 414 (PECN…PVLI), and 421 to 460 (QVKS…TAPV).

Belongs to the WD repeat ESC family. In terms of assembly, interacts with EZ1 and CLF. Component of the polycomb repressive complex 2 (PRC2), which methylates 'Lys-27' residues of histone H3 (H3K27me3), leading to transcriptional repression of the affected target gene. As to expression, expressed specifically in seed endosperm.

Functionally, polycomb group (PcG) protein. PcG proteins act by forming multiprotein complexes, which are required to maintain the transcriptionally repressive state of homeotic genes throughout development. PcG proteins are not required to initiate repression, but to maintain it during later stages of development. They act via the methylation of histones, rendering chromatin heritably changed in its expressibility. Together with EZ1 and CLF forms a complex that is involved in gene transcriptional repression by trimethylation on histone H3 'Lys-27' (H3K27me3) of target genes. Involved in the regulation of embryo and seed endosperm development. FIE1-containing PcG complex in seed endosperm regulates the expression of various transcription factors by trimethylation on histone H3 'Lys-27' (H3K27me3) of target genes. Involved in the overall expression regulation of nutrient metabolism genes, such as prolamin synthesis and seed storage protein synthesis genes. Can regulate valine, leucine and isoleucine metabolism-related genes. This is Polycomb group protein FIE1 from Oryza sativa subsp. japonica (Rice).